The primary structure comprises 761 residues: Phosphoribosylformylglycinamidine synthase subunit PurL (761 aa).

Residue His49 is part of the active site. Residues Tyr52 and Lys92 each coordinate ATP. Residue Glu94 coordinates Mg(2+). Residues 95–98 (SHNH) and Arg117 contribute to the substrate site. Catalysis depends on His96, which acts as the Proton acceptor. A Mg(2+)-binding site is contributed by Asp118. Substrate is bound at residue Gln241. Asp269 lines the Mg(2+) pocket. Residue 318–320 (ESQ) coordinates substrate. Positions 502 and 539 each coordinate ATP. A Mg(2+)-binding site is contributed by Asn540. Ser542 is a substrate binding site.

Belongs to the FGAMS family. Monomer. Part of the FGAM synthase complex composed of 1 PurL, 1 PurQ and 2 PurS subunits.

The protein resides in the cytoplasm. It carries out the reaction N(2)-formyl-N(1)-(5-phospho-beta-D-ribosyl)glycinamide + L-glutamine + ATP + H2O = 2-formamido-N(1)-(5-O-phospho-beta-D-ribosyl)acetamidine + L-glutamate + ADP + phosphate + H(+). The protein operates within purine metabolism; IMP biosynthesis via de novo pathway; 5-amino-1-(5-phospho-D-ribosyl)imidazole from N(2)-formyl-N(1)-(5-phospho-D-ribosyl)glycinamide: step 1/2. Its function is as follows. Part of the phosphoribosylformylglycinamidine synthase complex involved in the purines biosynthetic pathway. Catalyzes the ATP-dependent conversion of formylglycinamide ribonucleotide (FGAR) and glutamine to yield formylglycinamidine ribonucleotide (FGAM) and glutamate. The FGAM synthase complex is composed of three subunits. PurQ produces an ammonia molecule by converting glutamine to glutamate. PurL transfers the ammonia molecule to FGAR to form FGAM in an ATP-dependent manner. PurS interacts with PurQ and PurL and is thought to assist in the transfer of the ammonia molecule from PurQ to PurL. In Chlorobium luteolum (strain DSM 273 / BCRC 81028 / 2530) (Pelodictyon luteolum), this protein is Phosphoribosylformylglycinamidine synthase subunit PurL.